Here is a 198-residue protein sequence, read N- to C-terminus: MEHYISLFVKAVFIENMALSFFLGMCTFLAVSKKVSTAFGLGIAVTFVLGIAVPVNQLIYANVLKENALIEGVDLSFLNFITFIGVIAGLVQILEMVLDKFMPSLYNALGIFLPLIAVNCAIFGGVSFMVQRDYNFPESIVYGFGSGLGWMLAIVALAGLTEKMKYADIPAGLKGLGITFISVGLMALGFMSFSGIQL.

A run of 6 helical transmembrane segments spans residues 11–31 (AVFIENMALSFFLGMCTFLAV), 35–55 (VSTAFGLGIAVTFVLGIAVPV), 77–97 (FLNFITFIGVIAGLVQILEMV), 110–130 (GIFLPLIAVNCAIFGGVSFMV), 140–160 (IVYGFGSGLGWMLAIVALAGL), and 176–196 (LGITFISVGLMALGFMSFSGI).

The protein belongs to the NqrDE/RnfAE family. Composed of six subunits; NqrA, NqrB, NqrC, NqrD, NqrE and NqrF.

It localises to the cell inner membrane. It carries out the reaction a ubiquinone + n Na(+)(in) + NADH + H(+) = a ubiquinol + n Na(+)(out) + NAD(+). NQR complex catalyzes the reduction of ubiquinone-1 to ubiquinol by two successive reactions, coupled with the transport of Na(+) ions from the cytoplasm to the periplasm. NqrA to NqrE are probably involved in the second step, the conversion of ubisemiquinone to ubiquinol. The sequence is that of Na(+)-translocating NADH-quinone reductase subunit E from Haemophilus influenzae (strain 86-028NP).